Here is a 405-residue protein sequence, read N- to C-terminus: Type II secretion system protein F (405 aa).

Topologically, residues 1–168 are cytoplasmic; the sequence is MAAFEYLALD…QRQQSRQKIQ (168 aa). The Ca(2+) site is built by Thr97, Glu151, and Asp155. A helical membrane pass occupies residues 169-189; sequence LALLYPVILMVASLAIVGFLL. Residues 190–219 lie on the Periplasmic side of the membrane; it reads GYVVPDVVRVFIDSGQTLPLLTRVLIGVSD. The helical transmembrane segment at 220 to 239 threads the bilayer; it reads WVKAWGALAFVAAIGGVIGF. The Cytoplasmic portion of the chain corresponds to 240 to 376; that stretch reads RYALRKDAFR…IGLMVGLFEP (137 aa). A helical transmembrane segment spans residues 377–397; it reads FMLIFMGAVVLVIVLAILLPI. The Periplasmic segment spans residues 398-405; that stretch reads LSLNQLVG.

The protein belongs to the GSP F family. In terms of assembly, type II secretion system is composed of four main components: the outer membrane complex, the inner membrane complex, the cytoplasmic secretion ATPase and the periplasm-spanning pseudopilus. Homodimer. Interacts with XcpR/GspE and XcpY/GspL components.

It is found in the cell inner membrane. Its function is as follows. Component of the type II secretion system inner membrane complex required for the energy-dependent secretion of extracellular factors such as proteases and toxins from the periplasm. The sequence is that of Type II secretion system protein F (xcpS) from Pseudomonas aeruginosa (strain ATCC 15692 / DSM 22644 / CIP 104116 / JCM 14847 / LMG 12228 / 1C / PRS 101 / PAO1).